The following is a 250-amino-acid chain: ATP synthase subunit a (250 aa).

The next 6 helical transmembrane spans lie at 29–49 (ASLF…FATS), 84–104 (FFPL…LGMF), 114–134 (IIVT…YGFY), 143–163 (VFVP…IEII), 193–213 (FVAS…LPLI), and 216–236 (VALT…FAVL).

This sequence belongs to the ATPase A chain family. In terms of assembly, F-type ATPases have 2 components, CF(1) - the catalytic core - and CF(0) - the membrane proton channel. CF(1) has five subunits: alpha(3), beta(3), gamma(1), delta(1), epsilon(1). CF(0) has three main subunits: a(1), b(2) and c(9-12). The alpha and beta chains form an alternating ring which encloses part of the gamma chain. CF(1) is attached to CF(0) by a central stalk formed by the gamma and epsilon chains, while a peripheral stalk is formed by the delta and b chains.

It is found in the cell inner membrane. Key component of the proton channel; it plays a direct role in the translocation of protons across the membrane. The polypeptide is ATP synthase subunit a (Rhizobium leguminosarum bv. trifolii (strain WSM2304)).